A 485-amino-acid polypeptide reads, in one-letter code: Arginine biosynthesis bifunctional protein ArgJ, mitochondrial (485 aa).

Substrate-binding residues include threonine 185, lysine 214, threonine 225, and glutamate 315. Threonine 225 (nucleophile) is an active-site residue.

Belongs to the ArgJ family. As to quaternary structure, heterodimer of an alpha and a beta chain. In terms of processing, the alpha and beta chains are autoproteolytically processed from a single precursor protein within the mitochondrion.

The protein resides in the mitochondrion matrix. It carries out the reaction N(2)-acetyl-L-ornithine + L-glutamate = N-acetyl-L-glutamate + L-ornithine. The enzyme catalyses L-glutamate + acetyl-CoA = N-acetyl-L-glutamate + CoA + H(+). It participates in amino-acid biosynthesis; L-arginine biosynthesis; L-ornithine and N-acetyl-L-glutamate from L-glutamate and N(2)-acetyl-L-ornithine (cyclic): step 1/1. The protein operates within amino-acid biosynthesis; L-arginine biosynthesis; N(2)-acetyl-L-ornithine from L-glutamate: step 1/4. Its function is as follows. Catalyzes two activities which are involved in the cyclic version of arginine biosynthesis: the synthesis of acetylglutamate from glutamate and acetyl-CoA, and of ornithine by transacetylation between acetylornithine and glutamate. The protein is Arginine biosynthesis bifunctional protein ArgJ, mitochondrial of Penicillium rubens (strain ATCC 28089 / DSM 1075 / NRRL 1951 / Wisconsin 54-1255) (Penicillium chrysogenum).